The primary structure comprises 322 residues: Phosphatidylserine decarboxylase proenzyme (322 aa).

Catalysis depends on charge relay system; for autoendoproteolytic cleavage activity residues D90, H147, and S254. Residue S254 is the Schiff-base intermediate with substrate; via pyruvic acid; for decarboxylase activity of the active site. S254 is subject to Pyruvic acid (Ser); by autocatalysis. Positions F290–V322 are disordered. Residues E308–V322 show a composition bias toward basic and acidic residues.

This sequence belongs to the phosphatidylserine decarboxylase family. PSD-B subfamily. Prokaryotic type I sub-subfamily. Heterodimer of a large membrane-associated beta subunit and a small pyruvoyl-containing alpha subunit. Pyruvate is required as a cofactor. Post-translationally, is synthesized initially as an inactive proenzyme. Formation of the active enzyme involves a self-maturation process in which the active site pyruvoyl group is generated from an internal serine residue via an autocatalytic post-translational modification. Two non-identical subunits are generated from the proenzyme in this reaction, and the pyruvate is formed at the N-terminus of the alpha chain, which is derived from the carboxyl end of the proenzyme. The autoendoproteolytic cleavage occurs by a canonical serine protease mechanism, in which the side chain hydroxyl group of the serine supplies its oxygen atom to form the C-terminus of the beta chain, while the remainder of the serine residue undergoes an oxidative deamination to produce ammonia and the pyruvoyl prosthetic group on the alpha chain. During this reaction, the Ser that is part of the protease active site of the proenzyme becomes the pyruvoyl prosthetic group, which constitutes an essential element of the active site of the mature decarboxylase.

Its subcellular location is the cell membrane. It carries out the reaction a 1,2-diacyl-sn-glycero-3-phospho-L-serine + H(+) = a 1,2-diacyl-sn-glycero-3-phosphoethanolamine + CO2. It functions in the pathway phospholipid metabolism; phosphatidylethanolamine biosynthesis; phosphatidylethanolamine from CDP-diacylglycerol: step 2/2. In terms of biological role, catalyzes the formation of phosphatidylethanolamine (PtdEtn) from phosphatidylserine (PtdSer). In Escherichia fergusonii (strain ATCC 35469 / DSM 13698 / CCUG 18766 / IAM 14443 / JCM 21226 / LMG 7866 / NBRC 102419 / NCTC 12128 / CDC 0568-73), this protein is Phosphatidylserine decarboxylase proenzyme.